The sequence spans 279 residues: Ribosomal RNA small subunit methyltransferase J (279 aa).

Residues 138–139 and Asp-194 each bind S-adenosyl-L-methionine; that span reads ER.

This sequence belongs to the methyltransferase superfamily. RsmJ family.

The protein localises to the cytoplasm. It carries out the reaction guanosine(1516) in 16S rRNA + S-adenosyl-L-methionine = N(2)-methylguanosine(1516) in 16S rRNA + S-adenosyl-L-homocysteine + H(+). In terms of biological role, specifically methylates the guanosine in position 1516 of 16S rRNA. In Acinetobacter baumannii (strain SDF), this protein is Ribosomal RNA small subunit methyltransferase J.